Consider the following 367-residue polypeptide: Homoserine O-acetyltransferase (367 aa).

The AB hydrolase-1 domain occupies 44 to 350 (NAILVTHAWT…AYGHDAFLLE (307 aa)). Ser150 functions as the Nucleophile in the catalytic mechanism. Residue Arg217 participates in substrate binding. Catalysis depends on residues Asp311 and His344. Asp345 lines the substrate pocket.

Belongs to the AB hydrolase superfamily. MetX family. In terms of assembly, homodimer.

The protein localises to the cytoplasm. The enzyme catalyses L-homoserine + acetyl-CoA = O-acetyl-L-homoserine + CoA. The protein operates within amino-acid biosynthesis; L-methionine biosynthesis via de novo pathway; O-acetyl-L-homoserine from L-homoserine: step 1/1. Transfers an acetyl group from acetyl-CoA to L-homoserine, forming acetyl-L-homoserine. The polypeptide is Homoserine O-acetyltransferase (Citrifermentans bemidjiense (strain ATCC BAA-1014 / DSM 16622 / JCM 12645 / Bem) (Geobacter bemidjiensis)).